The following is a 132-amino-acid chain: Interleukin-5 (132 aa).

The first 19 residues, 1 to 19 (MHLRLTLVALGAAYVCANA), serve as a signal peptide directing secretion. 2 N-linked (GlcNAc...) asparagine glycosylation sites follow: asparagine 74 and asparagine 88.

This sequence belongs to the IL-5 family. As to quaternary structure, homodimer; disulfide-linked. Interacts with IL5RA. Interacts with CSF2RB.

The protein resides in the secreted. Functionally, homodimeric cytokine expressed predominantly by T-lymphocytes and NK cells that plays an important role in the survival, differentiation, and chemotaxis of eosinophils. Also acts on activated and resting B-cells to induce immunoglobulin production, growth, and differentiation. Mechanistically, exerts its biological effects through a receptor composed of IL5RA subunit and the cytokine receptor common subunit beta/CSF2RB. Binding to the receptor leads to activation of various kinases including LYN, SYK and JAK2 and thereby propagates signals through the RAS-MAPK and JAK-STAT5 pathways respectively. The sequence is that of Interleukin-5 (IL5) from Ovis aries (Sheep).